We begin with the raw amino-acid sequence, 376 residues long: Alanine racemase (376 aa).

Catalysis depends on Lys-40, which acts as the Proton acceptor; specific for D-alanine. Lys-40 carries the post-translational modification N6-(pyridoxal phosphate)lysine. Position 138 (Arg-138) interacts with substrate. The active-site Proton acceptor; specific for L-alanine is the Tyr-270. Substrate is bound at residue Met-317.

It belongs to the alanine racemase family. Pyridoxal 5'-phosphate is required as a cofactor.

The catalysed reaction is L-alanine = D-alanine. Its pathway is amino-acid biosynthesis; D-alanine biosynthesis; D-alanine from L-alanine: step 1/1. Catalyzes the interconversion of L-alanine and D-alanine. May also act on other amino acids. The sequence is that of Alanine racemase (alr) from Lactobacillus delbrueckii subsp. bulgaricus (strain ATCC BAA-365 / Lb-18).